The primary structure comprises 417 residues: Tol-Pal system protein TolB (417 aa).

The N-terminal stretch at 1 to 16 (MRYLWLFLIHTIGLFA) is a signal peptide.

This sequence belongs to the TolB family. The Tol-Pal system is composed of five core proteins: the inner membrane proteins TolA, TolQ and TolR, the periplasmic protein TolB and the outer membrane protein Pal. They form a network linking the inner and outer membranes and the peptidoglycan layer.

Its subcellular location is the periplasm. Functionally, part of the Tol-Pal system, which plays a role in outer membrane invagination during cell division and is important for maintaining outer membrane integrity. The protein is Tol-Pal system protein TolB of Helicobacter pylori (strain ATCC 700392 / 26695) (Campylobacter pylori).